The sequence spans 71 residues: Protein CYSTEINE-RICH TRANSMEMBRANE MODULE 8 (71 aa).

Positions 1-22 (MNQSAQNYFSVQKPSETSSGPY) are enriched in polar residues. Positions 1 to 35 (MNQSAQNYFSVQKPSETSSGPYTSPPPIGYPTRDA) are disordered. Residues 48–64 (NSKGVNPEGCCAAICCC) traverse the membrane as a helical segment.

The protein belongs to the CYSTM1 family. As to expression, mostly expressed in stems, siliques, roots and flowers and, to a lower extent, in leaves.

The protein resides in the membrane. It is found in the nucleus. In terms of biological role, involved in resistance to abiotic stress. The polypeptide is Protein CYSTEINE-RICH TRANSMEMBRANE MODULE 8 (Arabidopsis thaliana (Mouse-ear cress)).